Here is a 246-residue protein sequence, read N- to C-terminus: Large ribosomal subunit protein uL3 (246 aa).

Disordered stretches follow at residues 140–162 and 215–246; these read SHRSIGSTGGRQDPGKTFKNKKM and DVPLPGKFRENGSAGASQVEAAPEAPASEENA. Residue Q151 is modified to N5-methylglutamine. Residues 234–246 are compositionally biased toward low complexity; the sequence is EAAPEAPASEENA.

The protein belongs to the universal ribosomal protein uL3 family. As to quaternary structure, part of the 50S ribosomal subunit. Forms a cluster with proteins L14 and L19. Post-translationally, methylated by PrmB.

Functionally, one of the primary rRNA binding proteins, it binds directly near the 3'-end of the 23S rRNA, where it nucleates assembly of the 50S subunit. This is Large ribosomal subunit protein uL3 from Methylorubrum extorquens (strain PA1) (Methylobacterium extorquens).